Here is a 302-residue protein sequence, read N- to C-terminus: 4-hydroxy-tetrahydrodipicolinate synthase (302 aa).

Thr-46 provides a ligand contact to pyruvate. Catalysis depends on Tyr-134, which acts as the Proton donor/acceptor. Lys-162 acts as the Schiff-base intermediate with substrate in catalysis. Residue Val-204 participates in pyruvate binding.

This sequence belongs to the DapA family. As to quaternary structure, homotetramer; dimer of dimers.

The protein resides in the cytoplasm. The enzyme catalyses L-aspartate 4-semialdehyde + pyruvate = (2S,4S)-4-hydroxy-2,3,4,5-tetrahydrodipicolinate + H2O + H(+). It functions in the pathway amino-acid biosynthesis; L-lysine biosynthesis via DAP pathway; (S)-tetrahydrodipicolinate from L-aspartate: step 3/4. In terms of biological role, catalyzes the condensation of (S)-aspartate-beta-semialdehyde [(S)-ASA] and pyruvate to 4-hydroxy-tetrahydrodipicolinate (HTPA). The protein is 4-hydroxy-tetrahydrodipicolinate synthase of Xylella fastidiosa (strain Temecula1 / ATCC 700964).